The sequence spans 890 residues: Pentatricopeptide repeat-containing protein At3g57430, chloroplastic (890 aa).

The N-terminal 44 residues, 1–44 (MSCPLAFTFSLPSIFPFPSQLLPFSRHKHPYLLRATPTSATEDV), are a transit peptide targeting the chloroplast. PPR repeat units lie at residues 61–95 (SPEW…GIKP), 96–130 (DNYA…GYGV), 132–162 (SVTV…ISER), 163–197 (NQVS…NVEP), 198–231 (SSFT…GLRK), 235–265 (NSFI…FGGR), 266–300 (DLVT…GVEP), 301–335 (DEFT…GSLD), 337–371 (NSFV…KIGL), 372–398 (WNAM…MEES), 404–438 (NSTT…GLDR), 439–473 (DRFV…DLVT), 474–504 (WNTM…ERKV), 516–550 (NSIT…NLAT), 551–581 (DVAV…IPQK), 582–616 (NVIT…GVKP), 617–652 (NEVT…GVEP), and 653–683 (SSDH…MPRD). The segment at 689-764 (AWSSLLGASR…EPGCSWIEHG (76 aa)) is type E motif. Residues 765–795 (DEVHKFVAGDSSHPQSEKLSGYLETLWERMR) are type E(+) motif. Residues 796–890 (KEGYVPDTSC…NGTCSCGDYW (95 aa)) form a type DYW motif region.

This sequence belongs to the PPR family. PCMP-H subfamily.

Its subcellular location is the plastid. It localises to the chloroplast. Functionally, involved in RNA editing events in chloroplasts. Required for the editing of a single site in ndhB and ndhF transcripts, which are two plastid-encoded subunits of the chloroplast NAD(P)H dehydrogenase (NDH) complex. Required for the editing of a single site in psbZ. Required for optimal activity of the NDH complex of the photosynthetic electron transport chain. The sequence is that of Pentatricopeptide repeat-containing protein At3g57430, chloroplastic (PCMP-H81) from Arabidopsis thaliana (Mouse-ear cress).